The chain runs to 485 residues: Aldehyde dehydrogenase family 3 member A2 (485 aa).

Over methionine 1–lysine 463 the chain is Cytoplasmic. Glycine 185 to glycine 190 provides a ligand contact to NAD(+). Active-site residues include glutamate 207 and cysteine 241. Position 293 is a phosphoserine (serine 293). A helical membrane pass occupies residues leucine 464–tyrosine 484. The short motif at asparagine 481 to tyrosine 484 is the Prevents secretion from ER element.

The protein belongs to the aldehyde dehydrogenase family. As to quaternary structure, homodimer.

The protein localises to the microsome membrane. It localises to the endoplasmic reticulum membrane. It carries out the reaction an aldehyde + NAD(+) + H2O = a carboxylate + NADH + 2 H(+). It catalyses the reaction a fatty aldehyde + NAD(+) + H2O = a fatty acid + NADH + 2 H(+). The enzyme catalyses (2E)-hexadecenal + NAD(+) + H2O = (E)-hexadec-2-enoate + NADH + 2 H(+). The catalysed reaction is hexadecanoate + NADH + 2 H(+) = hexadecanal + NAD(+) + H2O. It carries out the reaction 22-oxodocosanoate + NAD(+) + H2O = docosanedioate + NADH + 2 H(+). It catalyses the reaction 2,6,10,14-tetramethylpentadecanal + NAD(+) + H2O = 2,6,10,14-tetramethylpentadecanoate + NADH + 2 H(+). The enzyme catalyses octadecanal + NAD(+) + H2O = octadecanoate + NADH + 2 H(+). The catalysed reaction is dodecanoate + NADH + 2 H(+) = dodecanal + NAD(+) + H2O. It carries out the reaction decanal + NAD(+) + H2O = decanoate + NADH + 2 H(+). It catalyses the reaction tetradecanal + NAD(+) + H2O = tetradecanoate + NADH + 2 H(+). The enzyme catalyses octanal + NAD(+) + H2O = octanoate + NADH + 2 H(+). The catalysed reaction is heptanal + NAD(+) + H2O = heptanoate + NADH + 2 H(+). It carries out the reaction (2E,6E)-farnesal + NAD(+) + H2O = (2E,6E)-farnesoate + NADH + 2 H(+). Catalyzes the oxidation of medium and long-chain aliphatic aldehydes to fatty acids. Active on a variety of saturated and unsaturated aliphatic aldehydes between 6 and 24 carbons in length. Responsible for conversion of the sphingosine 1-phosphate (S1P) degradation product hexadecenal to hexadecenoic acid. The polypeptide is Aldehyde dehydrogenase family 3 member A2 (ALDH3A2) (Macaca fascicularis (Crab-eating macaque)).